The sequence spans 433 residues: L-saccharopine oxidase (433 aa).

Residues 1–18 (MSRTIVIVGCGVFGLSTA) form the signal peptide. N24, N119, N188, and N229 each carry an N-linked (GlcNAc...) asparagine glycan.

This sequence belongs to the MSOX/MTOX family. As to quaternary structure, monomer. FAD serves as cofactor.

The protein localises to the secreted. It is found in the cytoplasm. Its subcellular location is the nucleus. The catalysed reaction is L-saccharopine + O2 + H2O = (S)-2-amino-6-oxohexanoate + L-glutamate + H2O2. The polypeptide is L-saccharopine oxidase (Schizosaccharomyces pombe (strain 972 / ATCC 24843) (Fission yeast)).